The following is a 495-amino-acid chain: Cobyric acid synthase (495 aa).

In terms of domain architecture, GATase cobBQ-type spans 253 to 446 (KISIAIVYFP…FHGIFDGSAF (194 aa)). Residue C334 is the Nucleophile of the active site. Residue H438 is part of the active site.

The protein belongs to the CobB/CobQ family. CobQ subfamily.

It functions in the pathway cofactor biosynthesis; adenosylcobalamin biosynthesis. In terms of biological role, catalyzes amidations at positions B, D, E, and G on adenosylcobyrinic A,C-diamide. NH(2) groups are provided by glutamine, and one molecule of ATP is hydrogenolyzed for each amidation. The sequence is that of Cobyric acid synthase from Chlorobium phaeobacteroides (strain BS1).